The primary structure comprises 584 residues: MASINTESDDYHPIVILIDELKNEDIQLRLNSIKKLQSIAKALGPERTRTELIPYLQDSVLEDEDEVLVVLSEELGNLIEFVGGAEHAVCLLPPLQILAGAEELVVREKAVESLCKIAKEIPTSSFEESFLPLLFSLSKADWFTSRTSACGLFTVSYPRANAEMKKSLRKTFGGLCHDDTPMVKRAAATNLGSFAKQIEKESVKSEILPLFQSLSTDEQDSVRLLGVENCALLGSMLTNEENIQFILPTIKASSLDKSWRVRYMVARLLKELCESMGTEITKTELIGAFVKLLKDTEAEVRTEASLRIADVCSLLTKEMNIKTILPCVKDLVSDSSQHVRAALAQVIMSLAPIYGKEDTLTHLLELFLHLLKDDFPDVRLNIISKLDQVSKVIGIEMLSQSLLPAIVELAEDHQWRVRLAIIDYIPLLASQLGVEFFDEKLGNLCMTWLGDPVFSIREAATNNLKKLTEVFGVDWAKNNIIPKVLSLHSHPNYLYRMTTLFSISTLSTVVGGDVISSSMVPLLAKMVSDKVPNIRFNVAKTFQTIIPLLDSTIVQSRVKPLLVKLHEDTDKDVKFYASQALQLC.

14 HEAT repeats span residues 7 to 45 (ESDD…ALGP), 46 to 84 (ERTR…FVGG), 86 to 123 (EHAV…EIPT), 168 to 206 (LRKT…VKSE), 207 to 239 (ILPL…MLTN), 240 to 278 (EENI…SMGT), 279 to 317 (EITK…LLTK), 318 to 356 (EMNI…IYGK), 358 to 395 (DTLT…VIGI), 397 to 434 (MLSQ…QLGV), 441 to 479 (LGNL…AKNN), 480 to 512 (IIPK…VVGG), 513 to 551 (DVIS…LLDS), and 553 to 584 (IVQS…LQLC).

It belongs to the phosphatase 2A regulatory subunit A family. Component of the Sca1 complex composed of at least gefA, gefH, scaA, phr, and the protein phosphatase 2A subunits pppA and pho2B.

The protein localises to the cytoplasm. The protein resides in the cytosol. It is found in the cell membrane. Functionally, scaffolding molecule which may coordinate the assembly of the catalytic subunit and a variable regulatory B subunit. Component of the Sca1 complex, a regulator of cell motility, chemotaxis and signal relay. The Sca1 complex is recruited to the plasma membrane in a chemoattractant- and F-actin-dependent manner and is enriched at the leading edge of chemotaxing cells where it regulates F-actin dynamics and signal relay by controlling the activation of rasC and the downstream target of rapamycin complex 2 (TORC2)-Akt/protein kinase B (PKB) pathway. This chain is Protein phosphatase 2A scaffold subunit (pppA), found in Dictyostelium discoideum (Social amoeba).